A 693-amino-acid chain; its full sequence is Glycine--tRNA ligase beta subunit (693 aa).

Basic and acidic residues predominate over residues 65-74; sequence QPDKSVEKRG. Residues 65–84 are disordered; it reads QPDKSVEKRGPAVKAAFDDS.

Belongs to the class-II aminoacyl-tRNA synthetase family. Tetramer of two alpha and two beta subunits.

The protein resides in the cytoplasm. It catalyses the reaction tRNA(Gly) + glycine + ATP = glycyl-tRNA(Gly) + AMP + diphosphate. This is Glycine--tRNA ligase beta subunit from Marinobacter nauticus (strain ATCC 700491 / DSM 11845 / VT8) (Marinobacter aquaeolei).